The primary structure comprises 517 residues: Shugoshin 1 (517 aa).

A coiled-coil region spans residues 1–89 (MAKERCQKRS…DVILQLRKEC (89 aa)). The interval 1 to 176 (MAKERCQKRS…DFDSGKVEST (176 aa)) is necessary for interaction with PPP2CA and PPP2R1A. Disordered regions lie at residues 107-136 (QSEE…LSGK), 149-173 (PYQT…SGKV), 267-317 (PEQI…TLDG), and 334-427 (HPTP…QESP). The stretch at 268–291 (EQIESKHKRARKRRAEQRRTKQRC) forms a coiled coil. Residues 273-302 (KHKRARKRRAEQRRTKQRCKSKSSLRSKGN) show a composition bias toward basic residues. Residues 341–363 (KMNNGCNKETDSSNSEVSDLECS) show a composition bias toward polar residues. A compositionally biased stretch (basic and acidic residues) spans 379 to 390 (RLRDYRESERAV). Ser426 carries the post-translational modification Phosphoserine. A PXVXL/I motif motif is present at residues 441-445 (PRVKI). A D-box motif is present at residues 447 to 455 (KPSLPPKRR). Phosphoserine; by NEK2 is present on Ser497.

The protein belongs to the shugoshin family. As to quaternary structure, interacts with PPP2CA (or PPP2CB), PPP2R1B, PPP2R5A, PPP2R5B, PPP2R5C, PPP2R5D, PPP2R5E, SET, LRRC59, RBM10 (or RBM5), RPL10A, RPL28, RPL7, RPL7A and RPLP1. Interaction with protein phosphatase 2A occurs most probably through direct binding to the regulatory B56 subunits: PPP2R1B, PPP2R5A, PPP2R5B, PPP2R5C, PPP2R5D, PPP2R5E. Interacts with PPP2R1A and NEK2. Interacts with CDCA8. Post-translationally, ubiquitinated and degraded during mitotic exit by APC/C-Cdh1. In terms of processing, phosphorylation by NEK2 is essential for chromosome congression in mitosis and for the proper attachment of spindle microtubule to the kinetochore. Phosphorylated by PLK1 and AUKRB. Ubiquitously expressed in proliferating cells. Moderately expressed in the oocytes.

The protein resides in the nucleus. The protein localises to the chromosome. It is found in the centromere. Its subcellular location is the kinetochore. It localises to the cytoplasm. The protein resides in the cytoskeleton. The protein localises to the spindle pole. It is found in the microtubule organizing center. Its subcellular location is the centrosome. It localises to the nucleus speckle. In terms of biological role, plays a central role in chromosome cohesion during mitosis by preventing premature dissociation of cohesin complex from centromeres after prophase, when most of cohesin complex dissociates from chromosomes arms. May act by preventing phosphorylation of the STAG2 subunit of cohesin complex at the centromere, ensuring cohesin persistence at centromere until cohesin cleavage by ESPL1/separase at anaphase. Essential for proper chromosome segregation during mitosis and this function requires interaction with PPP2R1A. Its phosphorylated form is necessary for chromosome congression and for the proper attachment of spindle microtubule to the kinetochore. Necessary for kinetochore localization of PLK1 and CENPF. May play a role in the tension sensing mechanism of the spindle-assembly checkpoint by regulating PLK1 kinetochore affinity. Involved in centromeric enrichment of AUKRB in prometaphase. This chain is Shugoshin 1, found in Mus musculus (Mouse).